The sequence spans 304 residues: Acetyl-coenzyme A carboxylase carboxyl transferase subunit beta (304 aa).

The CoA carboxyltransferase N-terminal domain maps to 25–294 (VWTKCDSCGQ…PSVVESKADT (270 aa)). The Zn(2+) site is built by cysteine 29, cysteine 32, cysteine 48, and cysteine 51. The segment at 29–51 (CDSCGQVLYRAELERNLEVCPKC) adopts a C4-type zinc-finger fold.

Belongs to the AccD/PCCB family. In terms of assembly, acetyl-CoA carboxylase is a heterohexamer composed of biotin carboxyl carrier protein (AccB), biotin carboxylase (AccC) and two subunits each of ACCase subunit alpha (AccA) and ACCase subunit beta (AccD). Zn(2+) is required as a cofactor.

It is found in the cytoplasm. The catalysed reaction is N(6)-carboxybiotinyl-L-lysyl-[protein] + acetyl-CoA = N(6)-biotinyl-L-lysyl-[protein] + malonyl-CoA. The protein operates within lipid metabolism; malonyl-CoA biosynthesis; malonyl-CoA from acetyl-CoA: step 1/1. Its function is as follows. Component of the acetyl coenzyme A carboxylase (ACC) complex. Biotin carboxylase (BC) catalyzes the carboxylation of biotin on its carrier protein (BCCP) and then the CO(2) group is transferred by the transcarboxylase to acetyl-CoA to form malonyl-CoA. This is Acetyl-coenzyme A carboxylase carboxyl transferase subunit beta from Yersinia pestis (strain Pestoides F).